We begin with the raw amino-acid sequence, 128 residues long: Small ribosomal subunit protein uS13 (128 aa).

Positions 85–128 (GSYRGLRHRRSLPVRGQRTHTNARTRKGPRRGTVANKKKATGKT) are disordered. Residues 89–128 (GLRHRRSLPVRGQRTHTNARTRKGPRRGTVANKKKATGKT) show a composition bias toward basic residues.

Belongs to the universal ribosomal protein uS13 family. As to quaternary structure, part of the 30S ribosomal subunit. Forms a loose heterodimer with protein S19. Forms two bridges to the 50S subunit in the 70S ribosome.

Located at the top of the head of the 30S subunit, it contacts several helices of the 16S rRNA. In the 70S ribosome it contacts the 23S rRNA (bridge B1a) and protein L5 of the 50S subunit (bridge B1b), connecting the 2 subunits; these bridges are implicated in subunit movement. Contacts the tRNAs in the A and P-sites. This Solibacter usitatus (strain Ellin6076) protein is Small ribosomal subunit protein uS13.